The following is a 553-amino-acid chain: Phosphomethylpyrimidine synthase (553 aa).

Substrate is bound by residues N192, M221, Y250, H286, 306–308, 347–350, and E386; these read SRG and DGLR. Residue H390 coordinates Zn(2+). Y413 serves as a coordination point for substrate. H454 provides a ligand contact to Zn(2+). Residues C534, C537, and C542 each coordinate [4Fe-4S] cluster.

It belongs to the ThiC family. As to quaternary structure, homodimer. The cofactor is [4Fe-4S] cluster.

The enzyme catalyses 5-amino-1-(5-phospho-beta-D-ribosyl)imidazole + S-adenosyl-L-methionine = 4-amino-2-methyl-5-(phosphooxymethyl)pyrimidine + CO + 5'-deoxyadenosine + formate + L-methionine + 3 H(+). It participates in cofactor biosynthesis; thiamine diphosphate biosynthesis. Functionally, catalyzes the synthesis of the hydroxymethylpyrimidine phosphate (HMP-P) moiety of thiamine from aminoimidazole ribotide (AIR) in a radical S-adenosyl-L-methionine (SAM)-dependent reaction. In Anaplasma marginale (strain St. Maries), this protein is Phosphomethylpyrimidine synthase.